A 181-amino-acid chain; its full sequence is Protein Syd (181 aa).

This sequence belongs to the Syd family.

Its subcellular location is the cell inner membrane. Functionally, interacts with the SecY protein in vivo. May bind preferentially to an uncomplexed state of SecY, thus functioning either as a chelating agent for excess SecY in the cell or as a regulatory factor that negatively controls the translocase function. This is Protein Syd from Cronobacter sakazakii (strain ATCC BAA-894) (Enterobacter sakazakii).